Consider the following 327-residue polypeptide: Malate dehydrogenase (327 aa).

NAD(+) contacts are provided by residues 20–25 (GAGRVG) and aspartate 44. Substrate is bound by residues arginine 93 and arginine 99. NAD(+)-binding positions include asparagine 106 and 129–131 (VTN). Positions 131 and 162 each coordinate substrate. The active-site Proton acceptor is histidine 186.

The protein belongs to the LDH/MDH superfamily. MDH type 3 family.

It carries out the reaction (S)-malate + NAD(+) = oxaloacetate + NADH + H(+). Catalyzes the reversible oxidation of malate to oxaloacetate. The sequence is that of Malate dehydrogenase from Nostoc punctiforme (strain ATCC 29133 / PCC 73102).